The chain runs to 431 residues: MKILDWSQLDVAARTDALTRPVQTVAAQTRNAVAALIADVRTRGDAALREITARFDGVSLERFAVSEAEFAAAEAAVAPELRQAMQDAVARIDTFHRAGMSEGYAVETAPGVVCEKIVRPIGRVGLYVPAGSAPLPSTALMLGVPARLAGCRAVVLCTPPRKDGSVDPAVLVAAWLTGVRRVFKLGGAQAIAAMAYGTESVPSCDKLFGPGNSYVTEAKQQVAQSGAAAIDMPAGPSEVLVIADAGAQAAFVAADLLSQAEHGADSQVLLLSDSDVLIDAVQAQLEIQLAHLSRADIARQALAQSRLIKVQTLDEAFAISNRYAPEHLILALREPRAWLAQVEAAGSVFLGDYTPEALGDYCSGTNHVLPTSGAARAYSGVSVASFQNMFSVQAASKAGIAGIGECALILARAEGLDAHANAVALRMGVAA.

Residues Tyr-127, Gln-189, and Asn-212 each contribute to the NAD(+) site. Residues Ser-237, Gln-259, and His-262 each coordinate substrate. The Zn(2+) site is built by Gln-259 and His-262. Catalysis depends on proton acceptor residues Glu-326 and His-327. Substrate is bound by residues His-327, Asp-360, Glu-414, and His-419. Asp-360 serves as a coordination point for Zn(2+). Zn(2+) is bound at residue His-419.

Belongs to the histidinol dehydrogenase family. Zn(2+) serves as cofactor.

It catalyses the reaction L-histidinol + 2 NAD(+) + H2O = L-histidine + 2 NADH + 3 H(+). It functions in the pathway amino-acid biosynthesis; L-histidine biosynthesis; L-histidine from 5-phospho-alpha-D-ribose 1-diphosphate: step 9/9. Functionally, catalyzes the sequential NAD-dependent oxidations of L-histidinol to L-histidinaldehyde and then to L-histidine. This chain is Histidinol dehydrogenase, found in Xanthomonas oryzae pv. oryzae (strain KACC10331 / KXO85).